Reading from the N-terminus, the 589-residue chain is Class I diterpene synthase 2, chloroplastic (589 aa).

Residues D328, D332, N472, T476, and E480 each contribute to the Mg(2+) site. Residues D328–D332 carry the DDXXD motif motif.

The protein belongs to the terpene synthase family. The cofactor is Mg(2+). Mostly expressed in trichomes of leaves and fruits.

The protein resides in the plastid. Its subcellular location is the chloroplast. It catalyses the reaction 9alpha-copalyl diphosphate + H2O = (13S)-vitexifolin A + diphosphate. It carries out the reaction peregrinol diphosphate = (13R)-9,13-epoxylabd-14-ene + diphosphate. The catalysed reaction is peregrinol diphosphate + H2O = viteagnusin D + diphosphate. It functions in the pathway secondary metabolite biosynthesis; terpenoid biosynthesis. Functionally, involved in the biosynthesis of labdane-type diterpenoid including cleroda-dienols, and peregrinol lactones and furan derivatives, dopaminergic diterpenoids that can bind to dopamine receptors in the human pituitary gland, have probably ability to lower prolactin levels, and are used to treat menstrual cycle disorders (e.g. premenstrual syndrome and mastodynia). Terpene synthase the catalyzes the conversion of peregrinol diphosphate to viteagnusin D and 9,13(R)-epoxy-labd-14-ene, and of syn-copalyl diphosophate to vitexifolin A. The chain is Class I diterpene synthase 2, chloroplastic from Vitex agnus-castus (Chaste tree).